We begin with the raw amino-acid sequence, 1077 residues long: Rap guanine nucleotide exchange factor 1 (1077 aa).

L57 participates in a covalent cross-link: Glycyl lysine isopeptide (Lys-Gly) (interchain with G-Cter in SUMO2). Disordered stretches follow at residues 207-235 (IEKQ…AELP) and 248-300 (TGMS…PTRV). Low complexity predominate over residues 213-228 (PSPTSPVKPSSPASKP). S281, S293, S314, S335, and S360 each carry phosphoserine. Positions 281 to 292 (SPPPALPPKKRQ) match the SH3-binding motif. Disordered stretches follow at residues 336 to 376 (GGSH…QCSR) and 411 to 494 (LSPL…EDLQ). A compositionally biased stretch (basic and acidic residues) spans 358–371 (SKSDEQLSSLDRDS). An SH3-binding motif is present at residues 451-462 (DTPPALPEKKRR). Positions 484-494 (QYDNISGEDLQ) are enriched in polar residues. Phosphotyrosine; by HCK is present on Y504. Short sequence motifs (SH3-binding) lie at residues 538–549 (EKPPPLPEKKNK) and 606–617 (APPPALPPKQRQ). The interval 600 to 670 (DSVQELAPPP…SEEEVDELSL (71 aa)) is disordered. A compositionally biased stretch (basic and acidic residues) spans 640–651 (KDSRDGSERAPK). Acidic residues predominate over residues 660 to 669 (QSEEEVDELS). Residues 688–810 (DGPDVRGGSG…LRKNILDKVD (123 aa)) enclose the N-terminal Ras-GEF domain. Positions 840–1064 (HSHEIAEQLT…WELSLKIKPR (225 aa)) constitute a Ras-GEF domain.

Interacts with HCK (via SH3-binding sites). Interacts with CRK (via SH3-binding sites). Post-translationally, phosphorylation at Tyr-504 enhances activity as Rap guanine nucleotide exchange factor. As to expression, ubiquitously expressed in adult and fetus. Expression is high in adult skeletal muscle and placenta and in fetal brain and heart. Low levels of expression in adult and fetal liver.

It localises to the early endosome. Functionally, guanine nucleotide-releasing protein that binds to SH3 domain of CRK and GRB2/ASH. Transduces signals from CRK to activate RAS. Involved in cell branching and adhesion mediated by BCAR1-CRK-RAPGEF1 signaling and activation of RAP1. Plays a role in the establishment of basal endothelial barrier function. Plays a role in nerve growth factor (NGF)-induced sustained activation of Rap1 and neurite outgrowth. This Homo sapiens (Human) protein is Rap guanine nucleotide exchange factor 1 (RAPGEF1).